A 643-amino-acid chain; its full sequence is Long-chain fatty acid transport protein 4 (643 aa).

Helical transmembrane passes span 20-42 (LPWT…WRFI) and 139-156 (FVGL…AALI). 243–254 (YIYTSGTTGLPK) serves as a coordination point for AMP.

It belongs to the ATP-dependent AMP-binding enzyme family.

It is found in the endoplasmic reticulum membrane. It carries out the reaction a fatty acid(in) = a fatty acid(out). The catalysed reaction is (9Z,12Z)-octadecadienoate(out) = (9Z,12Z)-octadecadienoate(in). The enzyme catalyses (9Z)-octadecenoate(out) = (9Z)-octadecenoate(in). It catalyses the reaction hexadecanoate(out) = hexadecanoate(in). It carries out the reaction a long-chain fatty acid + ATP + CoA = a long-chain fatty acyl-CoA + AMP + diphosphate. The catalysed reaction is (5Z,8Z,11Z,14Z)-eicosatetraenoate + ATP + CoA = (5Z,8Z,11Z,14Z)-eicosatetraenoyl-CoA + AMP + diphosphate. The enzyme catalyses (9Z)-octadecenoate + ATP + CoA = (9Z)-octadecenoyl-CoA + AMP + diphosphate. It catalyses the reaction hexadecanoate + ATP + CoA = hexadecanoyl-CoA + AMP + diphosphate. It carries out the reaction (E)-hexadec-2-enoate + ATP + CoA = (2E)-hexadecenoyl-CoA + AMP + diphosphate. The catalysed reaction is a very long-chain fatty acid + ATP + CoA = a very long-chain fatty acyl-CoA + AMP + diphosphate. The enzyme catalyses tetracosanoate + ATP + CoA = tetracosanoyl-CoA + AMP + diphosphate. Mediates the import of long-chain fatty acids (LCFA) into the cell by facilitating their transport across cell membranes. Appears to be the principal fatty acid transporter in small intestinal enterocytes. Also functions as an acyl-CoA ligase catalyzing the ATP-dependent formation of fatty acyl-CoA using LCFA and very-long-chain fatty acids (VLCFA) as substrates, which prevents fatty acid efflux from cells and might drive more fatty acid uptake. Plays a role in the formation of the epidermal barrier. Required for fat absorption in early embryogenesis. Probably involved in fatty acid transport across the blood barrier. Indirectly inhibits RPE65 via substrate competition and via production of VLCFA derivatives like lignoceroyl-CoA. Prevents light-induced degeneration of rods and cones. The polypeptide is Long-chain fatty acid transport protein 4 (SLC27A4) (Pongo abelii (Sumatran orangutan)).